The chain runs to 313 residues: MDAQAKKKAMFRSKLNAKKKDTRIDSPLVRYNESDQPVCRVCNVVLKSESLWDVHQASRKHHEAIDSLKASAAGVQRGSKPAETRPTKIEALAKSSNSQTSSGLPPNFFENREPARAEVEPAKSKNLEQSKHTIGSETNKSKGPLPAGFFDNQKTDSSNTKTTSEPKQSQTQTTGPETKPMVNGNLPTGFFDNKEADLLAHGIKLVKPDIKDEYKEFEKLIQDDLQVVDSRMEEEEVDAAETIEEEEQREQRSYKEKVEILKRKKMELKAARLAKRSKTSEGSVKKPKKTEEESPSDEEDDEDSAVDWRAQHL.

The short motif at 5–12 (AKKKAMFR) is the Nuclear localization signal 1 element. Residues 39–61 (CRVCNVVLKSESLWDVHQASRKH) form a C2H2-type zinc finger. Over residues 115-131 (ARAEVEPAKSKNLEQSK) the composition is skewed to basic and acidic residues. 3 disordered regions span residues 115-189 (ARAE…LPTG), 232-254 (MEEE…QRSY), and 271-313 (ARLA…AQHL). Over residues 155–176 (TDSSNTKTTSEPKQSQTQTTGP) the composition is skewed to polar residues. Over residues 232-248 (MEEEEVDAAETIEEEEQ) the composition is skewed to acidic residues. A coiled-coil region spans residues 232-271 (MEEEEVDAAETIEEEEQREQRSYKEKVEILKRKKMELKAA). A Nuclear localization signal 2 motif is present at residues 274-281 (AKRSKTSE). Positions 293 to 305 (ESPSDEEDDEDSA) are enriched in acidic residues.

Mostly expressed in siliques and, to a lower extent, in roots. Barely deteclable in leaves and stems.

Its subcellular location is the nucleus. It localises to the cytoplasm. Essential for breaking seed dormancy before seed germination. Prevents reactive oxygen species (ROS) accumulation in response to abscisic acid (ABA) and oxidative stress, probably by repressing the accumulation of ABA-induced ROS-scavenging enzymes (e.g. CSD3). This chain is Protein ABA AND ROS SENSITIVE 1, found in Arabidopsis thaliana (Mouse-ear cress).